Consider the following 208-residue polypeptide: Outer-membrane lipoprotein carrier protein (208 aa).

The signal sequence occupies residues 1–25 (MKKLFSAKLFSALVLSFSLFSTAHA).

This sequence belongs to the LolA family. Monomer.

It is found in the periplasm. In terms of biological role, participates in the translocation of lipoproteins from the inner membrane to the outer membrane. Only forms a complex with a lipoprotein if the residue after the N-terminal Cys is not an aspartate (The Asp acts as a targeting signal to indicate that the lipoprotein should stay in the inner membrane). The protein is Outer-membrane lipoprotein carrier protein of Vibrio campbellii (strain ATCC BAA-1116).